A 262-amino-acid polypeptide reads, in one-letter code: Ribosome-recycling factor, mitochondrial (262 aa).

Residues 1 to 55 (MALGIRCFRLLHPAFSSYLADLSRPVSEVPMKTVRGRQRDHIQYSAHPAVPVRQF) constitute a mitochondrion transit peptide.

Belongs to the RRF family.

Its subcellular location is the mitochondrion. Its function is as follows. Responsible for the disassembly of ribosomes from messenger RNA at the termination of mitochondrial protein biosynthesis. Acts in collaboration with GFM2. Promotes mitochondrial ribosome recycling by dissolution of intersubunit contacts. This Rattus norvegicus (Rat) protein is Ribosome-recycling factor, mitochondrial (Mrrf).